The following is a 323-amino-acid chain: Protoheme IX farnesyltransferase (323 aa).

9 helical membrane-spanning segments follow: residues 28–48, 50–70, 99–119, 122–142, 150–170, 178–198, 223–243, 244–264, and 279–299; these read IIPL…NGQV, PVLL…AQTL, HALI…VVFV, ASAL…THML, IVIG…AVTG, ALFA…ALMI, IWIY…PLAA, SGIV…YKTW, and LFKY…VDSL.

It belongs to the UbiA prenyltransferase family. Protoheme IX farnesyltransferase subfamily.

Its subcellular location is the cell inner membrane. The enzyme catalyses heme b + (2E,6E)-farnesyl diphosphate + H2O = Fe(II)-heme o + diphosphate. Its pathway is porphyrin-containing compound metabolism; heme O biosynthesis; heme O from protoheme: step 1/1. Converts heme B (protoheme IX) to heme O by substitution of the vinyl group on carbon 2 of heme B porphyrin ring with a hydroxyethyl farnesyl side group. The sequence is that of Protoheme IX farnesyltransferase from Gloeothece citriformis (strain PCC 7424) (Cyanothece sp. (strain PCC 7424)).